We begin with the raw amino-acid sequence, 344 residues long: Dihydroorotate dehydrogenase (quinone) (344 aa).

Residues 65-69 and T89 contribute to the FMN site; that span reads AGLDK. K69 is a binding site for substrate. A substrate-binding site is contributed by 114-118; the sequence is NRMGF. FMN contacts are provided by N145 and N178. N178 contributes to the substrate binding site. Residue S181 is the Nucleophile of the active site. Residue N183 participates in substrate binding. Positions 223 and 251 each coordinate FMN. 252 to 253 contacts substrate; it reads NT. Residues G274, G303, and 324–325 contribute to the FMN site; that span reads YT.

Belongs to the dihydroorotate dehydrogenase family. Type 2 subfamily. In terms of assembly, monomer. FMN is required as a cofactor.

Its subcellular location is the cell membrane. The enzyme catalyses (S)-dihydroorotate + a quinone = orotate + a quinol. Its pathway is pyrimidine metabolism; UMP biosynthesis via de novo pathway; orotate from (S)-dihydroorotate (quinone route): step 1/1. Its function is as follows. Catalyzes the conversion of dihydroorotate to orotate with quinone as electron acceptor. The chain is Dihydroorotate dehydrogenase (quinone) from Ralstonia nicotianae (strain ATCC BAA-1114 / GMI1000) (Ralstonia solanacearum).